A 246-amino-acid polypeptide reads, in one-letter code: Breast cancer metastasis-suppressor 1 (246 aa).

The interval Met1 to Arg57 is disordered. Acidic residues-rich tracts occupy residues Glu11–Glu32 and Glu40–Asp52. The stretch at Glu51 to Ala98 forms a coiled coil. Glycyl lysine isopeptide (Lys-Gly) (interchain with G-Cter in SUMO2) cross-links involve residues Lys184 and Lys242.

The protein belongs to the BRMS1 family. As to quaternary structure, homohexamer (Potential). Interacts with SNX6, HDAC1 and RELA. Interacts with ARID4A. Identified in mSin3A corepressor complexes together with SIN3A, SIN3B, RBBP4, RBBP7, SAP30, SUDS3, ARID4A, HDAC1 and HDAC2. Interacts with SPOP; this recruits the protein to a ubiquitin ligase complex containing SPOP and CUL3. Post-translationally, ubiquitinated by a cullin-RING-based BCR (BTB-CUL3-RBX1) E3 ubiquitin-protein ligase complex containing SPOP, leading to proteasomal degradation. As to expression, expression levels are higher in term placentas than in early placentas. Low levels of expression observed in normal pregnancies and in molar pregnancies.

Its subcellular location is the nucleus. It is found in the cytoplasm. Functionally, transcriptional repressor. Down-regulates transcription activation by NF-kappa-B by promoting the deacetylation of RELA at 'Lys-310'. Promotes HDAC1 binding to promoter regions. Down-regulates expression of anti-apoptotic genes that are controlled by NF-kappa-B. Promotes apoptosis in cells that have inadequate adherence to a substrate, a process called anoikis, and may thereby inhibit metastasis. May be a mediator of metastasis suppression in breast carcinoma. The chain is Breast cancer metastasis-suppressor 1 (BRMS1) from Homo sapiens (Human).